The primary structure comprises 315 residues: Calumenin (315 aa).

Residues 1 to 19 form the signal peptide; it reads MNKRPLLLCLGLWVACTLS. EF-hand domains are found at residues 68 to 103, 104 to 139, 151 to 186, 188 to 223, 229 to 264, and 265 to 300; these read ESKE…AQKK, YVYD…TYLD, QMMI…EEFD, MKDI…HDGD, WVKT…SDYD, and HSEA…FVGS. Residues aspartate 81, aspartate 83, aspartate 85, tyrosine 87, glutamate 92, aspartate 117, serine 119, aspartate 121, and glutamate 128 each coordinate Ca(2+). N-linked (GlcNAc...) asparagine glycosylation occurs at asparagine 131. Residues aspartate 164, aspartate 166, aspartate 168, glutamate 175, aspartate 201, asparagine 203, aspartate 205, glutamate 212, aspartate 242, asparagine 244, aspartate 246, lysine 248, glutamate 253, aspartate 278, asparagine 280, aspartate 282, lysine 284, and glutamate 289 each contribute to the Ca(2+) site. Positions 312–315 match the Prevents secretion from ER motif; sequence HDEF.

The protein belongs to the CREC family. As to quaternary structure, interacts with ggcx.

The protein resides in the endoplasmic reticulum membrane. Its subcellular location is the golgi apparatus. It is found in the secreted. It localises to the melanosome. The protein localises to the sarcoplasmic reticulum lumen. Involved in regulation of vitamin K-dependent carboxylation of multiple N-terminal glutamate residues. Seems to inhibit gamma-carboxylase ggcx. Binds 7 calcium ions with a low affinity. The chain is Calumenin (calu) from Xenopus laevis (African clawed frog).